Consider the following 778-residue polypeptide: Ubiquitin thioesterase trabid (778 aa).

2 consecutive RanBP2-type zinc fingers follow at residues Lys5–Leu36 and Asp89–Gly118. Polar residues predominate over residues Ala187 to Arg197. The interval Ala187–Gln226 is disordered. Over residues Gln198 to Gln226 the composition is skewed to low complexity. Residues Tyr232–Arg261 form a RanBP2-type 3 zinc finger. A disordered region spans residues Gly265–Asn290. Over residues Ser273–Gln288 the composition is skewed to low complexity. The 159-residue stretch at Met507 to Met665 folds into the OTU domain. The Nucleophile role is filled by Cys518. His658 functions as the Proton acceptor in the catalytic mechanism. 3 positions are modified to phosphoserine: Ser770, Ser771, and Ser775.

It belongs to the peptidase C64 family. As to quaternary structure, interacts with Apc.

The enzyme catalyses Thiol-dependent hydrolysis of ester, thioester, amide, peptide and isopeptide bonds formed by the C-terminal Gly of ubiquitin (a 76-residue protein attached to proteins as an intracellular targeting signal).. Positive regulator of the Wnt signaling pathway. Specifically cleaves 'Lys-63'-linked ubiquitin chains. May act by deubiquitinating APC protein, a negative regulator of Wnt-mediated transcription. Required for an efficient wg response, but not for other signaling responses, in the eye. This Drosophila melanogaster (Fruit fly) protein is Ubiquitin thioesterase trabid (trbd).